Here is a 216-residue protein sequence, read N- to C-terminus: Probable nicotinate-nucleotide adenylyltransferase (216 aa).

Belongs to the NadD family.

It catalyses the reaction nicotinate beta-D-ribonucleotide + ATP + H(+) = deamido-NAD(+) + diphosphate. The protein operates within cofactor biosynthesis; NAD(+) biosynthesis; deamido-NAD(+) from nicotinate D-ribonucleotide: step 1/1. Catalyzes the reversible adenylation of nicotinate mononucleotide (NaMN) to nicotinic acid adenine dinucleotide (NaAD). The polypeptide is Probable nicotinate-nucleotide adenylyltransferase (Marinobacter nauticus (strain ATCC 700491 / DSM 11845 / VT8) (Marinobacter aquaeolei)).